Consider the following 75-residue polypeptide: Small ribosomal subunit protein bS18 (75 aa).

The protein belongs to the bacterial ribosomal protein bS18 family. As to quaternary structure, part of the 30S ribosomal subunit. Forms a tight heterodimer with protein bS6.

In terms of biological role, binds as a heterodimer with protein bS6 to the central domain of the 16S rRNA, where it helps stabilize the platform of the 30S subunit. This is Small ribosomal subunit protein bS18 from Shewanella amazonensis (strain ATCC BAA-1098 / SB2B).